Consider the following 105-residue polypeptide: Circadian clock oscillator protein KaiB (105 aa).

Belongs to the KaiB family. May undergo a major conformational rearrangment; in the free state forms homooligomers. When bound to KaiC switches to a monomeric thioredoxin-fold (KaiB(fs)). The active oscillator complex is probably KaiC(6):KaiB(6).

Component of the KaiBC clock protein complex, which constitutes the main circadian regulator in cyanobacteria; it may modify the ATPase activity of KaiC. Functionally, may be a metamorphic protein which reversibly switches between an inactive tetrameric fold and a rare, thioredoxin-like monomeric fold (KaiB(fs)). KaiB(fs) binds phospho-KaiC, and perhaps clock output effectors. The sequence is that of Circadian clock oscillator protein KaiB from Prochlorococcus marinus (strain MIT 9312).